We begin with the raw amino-acid sequence, 364 residues long: MIRAFDAVSLPLLRWLDPEDAHRLAIQGLKLWPPVKPRPDDSKLAVRAFGLNFSNPVGIAAGFDKNAEAPDALLRLGFGFVEVGTVTPKPQAGNPRPRLFRLERDEAVINRMGFNNEGAEAVLRRLAARAQYGGIVGVNVGANKDSDDRVADYVKLIETFAPLASYFTVNVSSPNTPGLRNLQQAAALDDLLARVIDARERVRAAAGDTPVLLKIAPDLSLGELDDVVHIARSRRVDGMIVANTTLSRSPTLRERTKMNEQGGLSGRPLFRLSTRMVAETFVRAEGAFPLIGVGGIDSGGAALTKIRAGATLVQLYSALVYKGLGLVESIKADLASTLLRTGRDSLAEIVGADAPMITAEEWPV.

FMN is bound by residues 61–65 and threonine 85; that span reads AGFDK. Lysine 65 contributes to the substrate binding site. Substrate is bound at residue 110–114; that stretch reads NRMGF. Positions 139 and 170 each coordinate FMN. Asparagine 170 lines the substrate pocket. Catalysis depends on serine 173, which acts as the Nucleophile. Asparagine 175 is a substrate binding site. Residues lysine 214 and alanine 242 each coordinate FMN. Residue 243–244 coordinates substrate; it reads NT. Residues glycine 266, glycine 295, and 316 to 317 each bind FMN; that span reads YS.

The protein belongs to the dihydroorotate dehydrogenase family. Type 2 subfamily. In terms of assembly, monomer. FMN serves as cofactor.

It is found in the cell membrane. It carries out the reaction (S)-dihydroorotate + a quinone = orotate + a quinol. It participates in pyrimidine metabolism; UMP biosynthesis via de novo pathway; orotate from (S)-dihydroorotate (quinone route): step 1/1. Functionally, catalyzes the conversion of dihydroorotate to orotate with quinone as electron acceptor. This Rhodopseudomonas palustris (strain TIE-1) protein is Dihydroorotate dehydrogenase (quinone).